The chain runs to 152 residues: Putative toxin MJ1304 (152 aa).

The 121-residue stretch at 15-135 folds into the HEPN domain; sequence IKRAEEDLEV…EECLKDAENV (121 aa).

Functionally, putative toxin component of a putative type VII toxin-antitoxin (TA) system. Its cognate antitoxin might be MJ1305. This Methanocaldococcus jannaschii (strain ATCC 43067 / DSM 2661 / JAL-1 / JCM 10045 / NBRC 100440) (Methanococcus jannaschii) protein is Putative toxin MJ1304.